The sequence spans 226 residues: Small ribosomal subunit protein uS2c (226 aa).

This sequence belongs to the universal ribosomal protein uS2 family.

Its subcellular location is the plastid. It localises to the chloroplast. This chain is Small ribosomal subunit protein uS2c (rps2), found in Ostreococcus tauri.